A 318-amino-acid chain; its full sequence is MALENLLHPTNIKIDEYAKNATKFSFEALERGVGYTLGFALKQTMLYSIAGACVTSIKINDGKVTSLEDVIPCDETVADIILNVKSLPVTLAEGVETGTITFELSGSEEEIFSEEAKLSEGLAITEEVFICSYNGGKKLKIEAKVEKGVGFRPAQDNFKDGEFLLDATFSPVVFCDFEIKDARVGRRTDLDKLELNIKTNGNVNCEEALRLAATKIQNQLRNIVDIEEINKGIFVEDPTKDINPILLKHVEELNLTARSSNCLKAVNIRLIGELVQKTENELLKAPNFGKKSLTEIKDKLSELGLSLGTLIENWPQDL.

Residues M1–E227 are alpha N-terminal domain (alpha-NTD). Positions I242 to L318 are alpha C-terminal domain (alpha-CTD).

The protein belongs to the RNA polymerase alpha chain family. As to quaternary structure, homodimer. The RNAP catalytic core consists of 2 alpha, 1 beta, 1 beta' and 1 omega subunit. When a sigma factor is associated with the core the holoenzyme is formed, which can initiate transcription.

It catalyses the reaction RNA(n) + a ribonucleoside 5'-triphosphate = RNA(n+1) + diphosphate. Its function is as follows. DNA-dependent RNA polymerase catalyzes the transcription of DNA into RNA using the four ribonucleoside triphosphates as substrates. In Francisella tularensis subsp. novicida (strain U112), this protein is DNA-directed RNA polymerase subunit alpha 2.